A 345-amino-acid chain; its full sequence is NADPH-dependent oxidoreductase 2-alkenal reductase (345 aa).

Residues 52–53 (PY), 163–169 (AASGAVG), G188, K192, Y208, N232, C254, Y260, 284–286 (FVV), F330, and 334–336 (NVG) each bind NADP(+). Residue Y53 participates in substrate binding. Y260 provides a ligand contact to substrate.

The protein belongs to the NADP-dependent oxidoreductase L4BD family. As to quaternary structure, homodimer. Expressed in leaves.

The protein localises to the cytoplasm. The protein resides in the nucleus. Its subcellular location is the nucleoplasm. It carries out the reaction an n-alkanal + NAD(+) = an alk-2-enal + NADH + H(+). It catalyses the reaction an n-alkanal + NADP(+) = an alk-2-enal + NADPH + H(+). Its activity is regulated as follows. Inhibited by N-ethylmaleimide and p-chloromercuribenzoic acid. Its function is as follows. Involved in the detoxification of reactive carbonyls. Acts on lipid peroxide-derived reactive aldehydes. Specific to a double bond activated by an adjacent carbonyl group. Can use both quinones and diamide as substrates, but not menadione, ferricyanide or phylloquinone. Can use 4-hydroxy-(2E)-nonenal (HNE), 4-hydroxy-(2E)-hexenal (HHE), (2E)-nonenal, (2E)-hexenal, (2E)-pentenal, propenal (acrolein), 3-buten-2-one and 3-penten-2-one, but not (R)-(-)-carvone, n-nonanal, n-hexanal, (3Z)-hexanal, cyclohex-2-en-1-one or 12-oxo phytodienoic acid (OPDA) as electron acceptors. Catalyzes the reduction of the alpha,beta-unsaturated bond of 2-alkenals, of lipid peroxide-derived oxenes 9-oxo-10(E),12(Z)-octadecadienoic acid (9-KODE) and 13-oxo-9(Z),11(E)-octadecadienoic acid (13-KODE), as well as 4-oxo-(2E)-nonenal and 4-hydroxynonenal. Can use 12-oxo-10(E) dodecanoate (traumatin), trans-1,3 diphenyl-2-propenone, trans-1,4-diphenyl-2-butene-1,4-dione, 9-oxo-12,13-epoxy-(10E)-octadecenoic acid (trans-EKODE-1b) and 9,13-dihydroxy-10-oxo-11-octadecenoic acid as substrates. Catalyzes the reduction of the 7-8 double bond of phenylpropanal substrates, such as p-coumaryl aldehyde and coniferyl aldehyde (in vitro). Has activity towards toxic substrates, such as 4-hydroxy-(2E)-nonenal (in vitro). May play a distinct role in plant antioxidant defense and is possibly involved in NAD(P)/NAD(P)H homeostasis. The sequence is that of NADPH-dependent oxidoreductase 2-alkenal reductase from Arabidopsis thaliana (Mouse-ear cress).